A 93-amino-acid polypeptide reads, in one-letter code: Large ribosomal subunit protein uL23cz/uL23cy (93 aa).

Belongs to the universal ribosomal protein uL23 family. As to quaternary structure, part of the 50S ribosomal subunit.

It localises to the plastid. It is found in the chloroplast. Functionally, binds to 23S rRNA. In Acorus calamus (Sweet flag), this protein is Large ribosomal subunit protein uL23cz/uL23cy (rpl23-A).